We begin with the raw amino-acid sequence, 164 residues long: B-phycoerythrin alpha chain (164 aa).

2 residues coordinate (2R,3E)-phycoerythrobilin: Cys82 and Cys139.

The protein belongs to the phycobiliprotein family. As to quaternary structure, heteromer of 6 alpha, 6 beta and one gamma chain. Post-translationally, contains two covalently linked bilin chromophores.

Its subcellular location is the plastid. The protein resides in the chloroplast thylakoid membrane. In terms of biological role, light-harvesting photosynthetic bile pigment-protein from the phycobiliprotein complex. This is B-phycoerythrin alpha chain (cpeA) from Porphyridium purpureum (Red alga).